A 511-amino-acid polypeptide reads, in one-letter code: MVVGQAKAAMGKISSAIGERSKRISGAMNEPLRKRKILLVIVCIAMLLDNMLYMVIVPIVPNYLETIRTYKLVYITIPSNGTNGSLLNSTQRAVLERNPNANEDIQIGVLFASKAILQLLSNPFTGTFIDRVGYDIPLLIGLTIMFFSTITFAFGESYAILFAARSLQGLGSAFADTSGIAMIADKYTEESERTQALGIALAFISFGSLVAPPFGGVLYQFAGKWVPFLVLSFVCLLDGILLLMVVTPFASRTRGNTLQGTPIHKLMIDPYIAVVAGALTTCNIPLAFLEPTISNWMKKTMNASEWQMGITWLPAFFPHILGVYITVKLAAKYPNYQWLYGAFGLVIIGVSSCTIPACRNFEELIIPLCALCFGIALVDTALLPTLAFLVDIRYVSVYGSVYAIADISYSVAYALGPIMAGQIVHDLGFVQLNLGMGLVNILYAPALLFLRNVCQMKPSLSERNILLEDGPKGLYDTIIMEERKAAKEPHGTSSGNHSVHAVLSDQEGYSE.

Topologically, residues 1-36 (MVVGQAKAAMGKISSAIGERSKRISGAMNEPLRKRK) are cytoplasmic. Residues 37–57 (ILLVIVCIAMLLDNMLYMVIV) traverse the membrane as a helical segment. The Lumenal, vesicle portion of the chain corresponds to 58–108 (PIVPNYLETIRTYKLVYITIPSNGTNGSLLNSTQRAVLERNPNANEDIQIG). N-linked (GlcNAc...) asparagine glycosylation is found at Asn-80, Asn-83, and Asn-88. The helical transmembrane segment at 109–129 (VLFASKAILQLLSNPFTGTFI) threads the bilayer. Residues 130–135 (DRVGYD) are Cytoplasmic-facing. A helical membrane pass occupies residues 136–156 (IPLLIGLTIMFFSTITFAFGE). Residues 157–165 (SYAILFAAR) lie on the Lumenal, vesicle side of the membrane. A helical transmembrane segment spans residues 166 to 186 (SLQGLGSAFADTSGIAMIADK). Topologically, residues 187-197 (YTEESERTQAL) are cytoplasmic. Residues 198–218 (GIALAFISFGSLVAPPFGGVL) form a helical membrane-spanning segment. Over 219–225 (YQFAGKW) the chain is Lumenal, vesicle. The helical transmembrane segment at 226 to 246 (VPFLVLSFVCLLDGILLLMVV) threads the bilayer. At 247–267 (TPFASRTRGNTLQGTPIHKLM) the chain is on the cytoplasmic side. The chain crosses the membrane as a helical span at residues 268–288 (IDPYIAVVAGALTTCNIPLAF). The Lumenal, vesicle portion of the chain corresponds to 289 to 306 (LEPTISNWMKKTMNASEW). Asn-302 carries N-linked (GlcNAc...) asparagine glycosylation. Residues 307–327 (QMGITWLPAFFPHILGVYITV) form a helical membrane-spanning segment. Residues 328 to 337 (KLAAKYPNYQ) lie on the Cytoplasmic side of the membrane. A helical membrane pass occupies residues 338–358 (WLYGAFGLVIIGVSSCTIPAC). At 359 to 363 (RNFEE) the chain is on the lumenal, vesicle side. The chain crosses the membrane as a helical span at residues 364 to 384 (LIIPLCALCFGIALVDTALLP). Topologically, residues 385-400 (TLAFLVDIRYVSVYGS) are cytoplasmic. A helical membrane pass occupies residues 401 to 421 (VYAIADISYSVAYALGPIMAG). Residues 422–428 (QIVHDLG) are Lumenal, vesicle-facing. The helical transmembrane segment at 429-449 (FVQLNLGMGLVNILYAPALLF) threads the bilayer. Over 450-511 (LRNVCQMKPS…VLSDQEGYSE (62 aa)) the chain is Cytoplasmic. A disordered region spans residues 486-511 (AKEPHGTSSGNHSVHAVLSDQEGYSE).

The protein belongs to the major facilitator superfamily. Vesicular transporter family. As to expression, high expression in the electric lobe of the brain.

It localises to the membrane. In terms of biological role, involved in acetylcholine transport into synaptic vesicles. This Torpedo torpedo (Common torpedo) protein is Vesicular acetylcholine transporter.